A 611-amino-acid polypeptide reads, in one-letter code: Chaperone protein HtpG (611 aa).

The tract at residues 1–326 (MSETLERHAF…TEDLPLNVSR (326 aa)) is a; substrate-binding. The b stretch occupies residues 327–536 (EMLQATPVLA…SGGPDLQMQR (210 aa)). Residues 537 to 611 (LLRRAGRGFG…RVATALAAQG (75 aa)) are c.

Belongs to the heat shock protein 90 family. In terms of assembly, homodimer.

The protein resides in the cytoplasm. Molecular chaperone. Has ATPase activity. The protein is Chaperone protein HtpG of Methylobacterium nodulans (strain LMG 21967 / CNCM I-2342 / ORS 2060).